The following is a 514-amino-acid chain: Na(+)/H(+) antiporter NhaB (514 aa).

Transmembrane regions (helical) follow at residues 23-43, 63-83, 97-117, 120-140, 144-164, 202-222, 238-258, 303-323, 357-377, 391-411, 447-467, and 475-495; these read LALL…PFVA, PLLP…TSAA, LLLM…LFIF, LLLS…AAAF, FLDA…FYGI, LMMH…VGEP, FFLR…LTCM, AVIG…VGLI, LTVF…APII, LFYL…VGTI, ATPN…APLI, and VWMA…CVEF.

The protein belongs to the NhaB Na(+)/H(+) (TC 2.A.34) antiporter family.

Its subcellular location is the cell inner membrane. It catalyses the reaction 2 Na(+)(in) + 3 H(+)(out) = 2 Na(+)(out) + 3 H(+)(in). Functionally, na(+)/H(+) antiporter that extrudes sodium in exchange for external protons. The polypeptide is Na(+)/H(+) antiporter NhaB (Salmonella paratyphi A (strain ATCC 9150 / SARB42)).